The sequence spans 144 residues: 3-hydroxyacyl-[acyl-carrier-protein] dehydratase FabZ (144 aa).

Residue histidine 51 is part of the active site.

It belongs to the thioester dehydratase family. FabZ subfamily.

It localises to the cytoplasm. It carries out the reaction a (3R)-hydroxyacyl-[ACP] = a (2E)-enoyl-[ACP] + H2O. In terms of biological role, involved in unsaturated fatty acids biosynthesis. Catalyzes the dehydration of short chain beta-hydroxyacyl-ACPs and long chain saturated and unsaturated beta-hydroxyacyl-ACPs. The sequence is that of 3-hydroxyacyl-[acyl-carrier-protein] dehydratase FabZ from Clostridium botulinum (strain ATCC 19397 / Type A).